A 130-amino-acid chain; its full sequence is MRKESFLTFYFSNHLYLCPAIIRLSSVCTLARTDYYLPSNIAVTYDIQISSLGFTYRIDFFLALFSDPARPFLTEINRKIGQYACVIREREQAGEYSFHYSLCININVYILHIHIYIDRYIYAYINAQVQ.

A helical membrane pass occupies residues 15–31 (LYLCPAIIRLSSVCTLA).

The protein localises to the membrane. This is an uncharacterized protein from Saccharomyces cerevisiae (strain ATCC 204508 / S288c) (Baker's yeast).